The sequence spans 941 residues: 26S proteasome regulatory subunit RPN2 (941 aa).

PC repeat units follow at residues 363 to 396 (SATA…SSRF), 400 to 437 (GSLY…EDVD), 442 to 476 (GASL…TSGE), 477 to 511 (AAAF…GNIT), 513 to 546 (GLSM…LIRY), 547 to 582 (GGAF…DVRR), 583 to 615 (AAVT…AHDR), 617 to 651 (GAAF…FVRQ), 652 to 689 (AAMI…KHQE), and 695 to 731 (GACV…VGLA). Residues 808–854 (KARAKKTKKEKDTNEDDKKKKEKDLKKEETKKDDAKKESEAEEDFNK) form a disordered region. The span at 816–854 (KEKDTNEDDKKKKEKDLKKEETKKDDAKKESEAEEDFNK) shows a compositional bias: basic and acidic residues.

This sequence belongs to the proteasome subunit S1 family.

Acts as a regulatory subunit of the 26S proteasome which is involved in the ATP-dependent degradation of ubiquitinated proteins. The polypeptide is 26S proteasome regulatory subunit RPN2 (RPN2) (Candida glabrata (strain ATCC 2001 / BCRC 20586 / JCM 3761 / NBRC 0622 / NRRL Y-65 / CBS 138) (Yeast)).